The sequence spans 465 residues: Cyclin-A1 (465 aa).

It belongs to the cyclin family. Cyclin AB subfamily. In terms of assembly, interacts with the CDK2 and the CDC2 protein kinases to form a serine/threonine kinase holoenzyme complex. The cyclin subunit imparts substrate specificity to the complex. Does not bind CDK4 and CDK5 (in vitro). The cyclin A1-CDK2 complex interacts with transcription factor E2F-1 and RB proteins. Found in a complex with CDK2, CABLES1 and CCNE1. Interacts with INCA1. Interacts with KLHDC9. In terms of processing, polyubiquitinated via 'Lys-11'-linked ubiquitin by the anaphase-promoting complex (APC/C), leading to its degradation by the proteasome. Deubiquitinated and stabilized by USP37 enables entry into S phase. Ubiquitinated during the G1 phase by the SCF(FBXO31) complex, leading to its proteasomal degradation. As to expression, very high levels in testis and very low levels in brain. Also found in myeloid leukemia cell lines.

It is found in the nucleus. Functionally, may be involved in the control of the cell cycle at the G1/S (start) and G2/M (mitosis) transitions. May primarily function in the control of the germline meiotic cell cycle and additionally in the control of mitotic cell cycle in some somatic cells. The protein is Cyclin-A1 (CCNA1) of Homo sapiens (Human).